We begin with the raw amino-acid sequence, 658 residues long: Glycogen debranching enzyme (658 aa).

Aspartate 336 (nucleophile) is an active-site residue. Glutamate 371 serves as the catalytic Proton donor. A disordered region spans residues 459-484; sequence EANGEENRDGTNSNYSDNHGKEGLGG.

This sequence belongs to the glycosyl hydrolase 13 family.

The enzyme catalyses Hydrolysis of (1-&gt;6)-alpha-D-glucosidic linkages to branches with degrees of polymerization of three or four glucose residues in limit dextrin.. The protein operates within glycan degradation; glycogen degradation. Its function is as follows. Removes maltotriose and maltotetraose chains that are attached by 1,6-alpha-linkage to the limit dextrin main chain, generating a debranched limit dextrin. The protein is Glycogen debranching enzyme of Salmonella dublin (strain CT_02021853).